Here is a 119-residue protein sequence, read N- to C-terminus: Flagellar transcriptional regulator FlhD (119 aa).

Belongs to the FlhD family. In terms of assembly, homodimer; disulfide-linked. Forms a heterohexamer composed of two FlhC and four FlhD subunits. Each FlhC binds a FlhD dimer, forming a heterotrimer, and a hexamer assembles by dimerization of two heterotrimers.

Its subcellular location is the cytoplasm. Functionally, functions in complex with FlhC as a master transcriptional regulator that regulates transcription of several flagellar and non-flagellar operons by binding to their promoter region. Activates expression of class 2 flagellar genes, including fliA, which is a flagellum-specific sigma factor that turns on the class 3 genes. Also regulates genes whose products function in a variety of physiological pathways. This Enterobacter sp. (strain 638) protein is Flagellar transcriptional regulator FlhD.